Here is a 327-residue protein sequence, read N- to C-terminus: Nucleotide-binding protein Mflv_3714 (327 aa).

Basic and acidic residues predominate over residues 1–22 (MTRQGMRDDLRGEADSVVHDGT). Residues 1–29 (MTRQGMRDDLRGEADSVVHDGTDDIDNEN) form a disordered region. ATP is bound at residue 50–57 (GLSGAGRG). 101–104 (DVRS) serves as a coordination point for GTP.

It belongs to the RapZ-like family.

In terms of biological role, displays ATPase and GTPase activities. The protein is Nucleotide-binding protein Mflv_3714 of Mycolicibacterium gilvum (strain PYR-GCK) (Mycobacterium gilvum (strain PYR-GCK)).